We begin with the raw amino-acid sequence, 349 residues long: N-acetyltaurine hydrolase (349 aa).

A divalent metal cation-binding residues include His26, His28, Glu169, His201, His230, and Asp298.

It belongs to the metallo-dependent hydrolases superfamily. Phosphotriesterase family. It depends on a divalent metal cation as a cofactor.

It is found in the cytoplasm. Its subcellular location is the cytosol. The catalysed reaction is N-acetyltaurine + H2O = taurine + acetate. It carries out the reaction N-propanoyltaurine + H2O = propanoate + taurine. The enzyme catalyses N-acetyl-L-methionine + H2O = L-methionine + acetate. It catalyses the reaction N-acetyl-L-isoleucine + H2O = L-isoleucine + acetate. The catalysed reaction is N-acetyl-L-leucine + H2O = L-leucine + acetate. It carries out the reaction N-acetyl-L-valine + H2O = L-valine + acetate. N-acetyltaurine hydrolase that catalyzes the hydrolysis of N-acetyltaurine into taurine and acetate. PTER also acts on other N-acetyl amino acids (Met, Ile, Leu, Val) and N-propionyltaurine, but at lower rates. The polypeptide is N-acetyltaurine hydrolase (pter) (Tetraodon nigroviridis (Spotted green pufferfish)).